Reading from the N-terminus, the 218-residue chain is Phosphatidylserine decarboxylase proenzyme (218 aa).

Ser-188 (schiff-base intermediate with substrate; via pyruvic acid) is an active-site residue. Ser-188 is modified (pyruvic acid (Ser); by autocatalysis).

This sequence belongs to the phosphatidylserine decarboxylase family. PSD-A subfamily. Heterodimer of a large membrane-associated beta subunit and a small pyruvoyl-containing alpha subunit. The cofactor is pyruvate. Is synthesized initially as an inactive proenzyme. Formation of the active enzyme involves a self-maturation process in which the active site pyruvoyl group is generated from an internal serine residue via an autocatalytic post-translational modification. Two non-identical subunits are generated from the proenzyme in this reaction, and the pyruvate is formed at the N-terminus of the alpha chain, which is derived from the carboxyl end of the proenzyme. The post-translation cleavage follows an unusual pathway, termed non-hydrolytic serinolysis, in which the side chain hydroxyl group of the serine supplies its oxygen atom to form the C-terminus of the beta chain, while the remainder of the serine residue undergoes an oxidative deamination to produce ammonia and the pyruvoyl prosthetic group on the alpha chain.

The protein resides in the cell membrane. The enzyme catalyses a 1,2-diacyl-sn-glycero-3-phospho-L-serine + H(+) = a 1,2-diacyl-sn-glycero-3-phosphoethanolamine + CO2. It functions in the pathway phospholipid metabolism; phosphatidylethanolamine biosynthesis; phosphatidylethanolamine from CDP-diacylglycerol: step 2/2. Functionally, catalyzes the formation of phosphatidylethanolamine (PtdEtn) from phosphatidylserine (PtdSer). The sequence is that of Phosphatidylserine decarboxylase proenzyme from Streptomyces coelicolor (strain ATCC BAA-471 / A3(2) / M145).